The primary structure comprises 201 residues: ADP-ribosylation factor-related protein 1 (201 aa).

N-acetylmethionine is present on M1. GTP is bound by residues 24-31, 75-79, and 134-137; these read GLDNAGKT, DLGGQ, and NKQD.

Belongs to the small GTPase superfamily. Arf family. Interacts with SYS1.

It localises to the golgi apparatus. Its subcellular location is the trans-Golgi network. In terms of biological role, trans-Golgi-associated GTPase that regulates protein sorting. Controls the targeting of ARL1 and its effector to the trans-Golgi. Required for the lipidation of chylomicrons in the intestine and required for VLDL lipidation in the liver. This Mus musculus (Mouse) protein is ADP-ribosylation factor-related protein 1 (Arfrp1).